Reading from the N-terminus, the 185-residue chain is Ribosome-recycling factor (185 aa).

It belongs to the RRF family.

It is found in the cytoplasm. In terms of biological role, responsible for the release of ribosomes from messenger RNA at the termination of protein biosynthesis. May increase the efficiency of translation by recycling ribosomes from one round of translation to another. This chain is Ribosome-recycling factor, found in Buchnera aphidicola subsp. Schizaphis graminum (strain Sg).